The sequence spans 214 residues: MIKLNTIFDYPNISLHFDLHISLGEKIAIIGESGAGKSTLLNLIAGFEPVKQGEIRLNGENHTYTAPHQRPVSILFQEHNLFTHLTVWQNIAIGLRADLKLSKEEIKQLEKVASAVGLTDFLSRLPKELSGGQRQRVALARCLLRDKPILLLDEPFSALDPHLRQEMLTLIDKFCREKQLTLLLVTHQLSEVIDKIDRIVEIKNGQATEREIPR.

Positions 2-212 (IKLNTIFDYP…KNGQATEREI (211 aa)) constitute an ABC transporter domain. An ATP-binding site is contributed by 31–38 (GESGAGKS).

This sequence belongs to the ABC transporter superfamily. Thiamine importer (TC 3.A.1.19.1) family. As to quaternary structure, the complex is composed of two ATP-binding proteins (ThiQ), two transmembrane proteins (ThiP) and a solute-binding protein (ThiB).

It is found in the cell inner membrane. The enzyme catalyses thiamine(out) + ATP + H2O = thiamine(in) + ADP + phosphate + H(+). In terms of biological role, part of the ABC transporter complex ThiBPQ involved in thiamine import. Responsible for energy coupling to the transport system. The protein is Thiamine import ATP-binding protein ThiQ of Histophilus somni (strain 129Pt) (Haemophilus somnus).